The primary structure comprises 159 residues: Ribosomal RNA large subunit methyltransferase H (159 aa).

Residues Leu76, Gly108, and 127–132 contribute to the S-adenosyl-L-methionine site; that span reads FSKMTF.

It belongs to the RNA methyltransferase RlmH family. In terms of assembly, homodimer.

Its subcellular location is the cytoplasm. The catalysed reaction is pseudouridine(1915) in 23S rRNA + S-adenosyl-L-methionine = N(3)-methylpseudouridine(1915) in 23S rRNA + S-adenosyl-L-homocysteine + H(+). Specifically methylates the pseudouridine at position 1915 (m3Psi1915) in 23S rRNA. In Staphylococcus aureus (strain MSSA476), this protein is Ribosomal RNA large subunit methyltransferase H.